The sequence spans 385 residues: Putative 8-amino-7-oxononanoate synthase (385 aa).

Position 22 (Arg-22) interacts with substrate. 109–110 (GY) provides a ligand contact to pyridoxal 5'-phosphate. His-134 contacts substrate. Pyridoxal 5'-phosphate is bound by residues Ser-182, 207-210 (DEAH), and 238-241 (TLSK). Residue Lys-241 is modified to N6-(pyridoxal phosphate)lysine. Residue Thr-353 coordinates substrate.

Belongs to the class-II pyridoxal-phosphate-dependent aminotransferase family. BioF subfamily. In terms of assembly, homodimer. The cofactor is pyridoxal 5'-phosphate.

The catalysed reaction is 6-carboxyhexanoyl-[ACP] + L-alanine + H(+) = (8S)-8-amino-7-oxononanoate + holo-[ACP] + CO2. Its pathway is cofactor biosynthesis; biotin biosynthesis. Functionally, catalyzes the decarboxylative condensation of pimeloyl-[acyl-carrier protein] and L-alanine to produce 8-amino-7-oxononanoate (AON), [acyl-carrier protein], and carbon dioxide. In Microcystis aeruginosa (strain NIES-843 / IAM M-2473), this protein is Putative 8-amino-7-oxononanoate synthase (bioF).